The chain runs to 380 residues: Cytochrome b (380 aa).

The next 4 membrane-spanning stretches (helical) occupy residues 34-54 (FGSL…LLAM), 78-99 (WLIR…YMHI), 114-134 (WNTG…GYVL), and 179-199 (FFAL…IHLT). Positions 84 and 98 each coordinate heme b. Heme b contacts are provided by His-183 and His-197. A ubiquinone is bound at residue His-202. 4 consecutive transmembrane segments (helical) span residues 227-247 (SKDI…ALFS), 289-309 (LGGV…PFLH), 321-341 (LSQM…WIGS), and 348-368 (FIII…ILLP).

This sequence belongs to the cytochrome b family. The cytochrome bc1 complex contains 11 subunits: 3 respiratory subunits (MT-CYB, CYC1 and UQCRFS1), 2 core proteins (UQCRC1 and UQCRC2) and 6 low-molecular weight proteins (UQCRH/QCR6, UQCRB/QCR7, UQCRQ/QCR8, UQCR10/QCR9, UQCR11/QCR10 and a cleavage product of UQCRFS1). This cytochrome bc1 complex then forms a dimer. Requires heme b as cofactor.

The protein resides in the mitochondrion inner membrane. Functionally, component of the ubiquinol-cytochrome c reductase complex (complex III or cytochrome b-c1 complex) that is part of the mitochondrial respiratory chain. The b-c1 complex mediates electron transfer from ubiquinol to cytochrome c. Contributes to the generation of a proton gradient across the mitochondrial membrane that is then used for ATP synthesis. The sequence is that of Cytochrome b (MT-CYB) from Caracara plancus (Southern caracara).